A 189-amino-acid polypeptide reads, in one-letter code: 2-oxoglutarate synthase subunit KorC (189 aa).

As to quaternary structure, heterotetramer of the KorA, KorB, KorC and KorD subunits.

It catalyses the reaction 2 oxidized [2Fe-2S]-[ferredoxin] + 2-oxoglutarate + CoA = succinyl-CoA + 2 reduced [2Fe-2S]-[ferredoxin] + CO2 + H(+). The polypeptide is 2-oxoglutarate synthase subunit KorC (korC) (Methanothermobacter thermautotrophicus (strain ATCC 29096 / DSM 1053 / JCM 10044 / NBRC 100330 / Delta H) (Methanobacterium thermoautotrophicum)).